A 391-amino-acid polypeptide reads, in one-letter code: Formate-dependent phosphoribosylglycinamide formyltransferase (391 aa).

N(1)-(5-phospho-beta-D-ribosyl)glycinamide is bound by residues 20 to 21 (EL) and E80. Residues R112, K153, 158–163 (SSGKGQ), 193–196 (EGFI), and E201 contribute to the ATP site. An ATP-grasp domain is found at 117 to 306 (RLAAETLGLP…EFALHVRAIL (190 aa)). 2 residues coordinate Mg(2+): E265 and E277. N(1)-(5-phospho-beta-D-ribosyl)glycinamide is bound by residues D284, K354, and 361-362 (RR).

Belongs to the PurK/PurT family. Homodimer.

The catalysed reaction is N(1)-(5-phospho-beta-D-ribosyl)glycinamide + formate + ATP = N(2)-formyl-N(1)-(5-phospho-beta-D-ribosyl)glycinamide + ADP + phosphate + H(+). Its pathway is purine metabolism; IMP biosynthesis via de novo pathway; N(2)-formyl-N(1)-(5-phospho-D-ribosyl)glycinamide from N(1)-(5-phospho-D-ribosyl)glycinamide (formate route): step 1/1. In terms of biological role, involved in the de novo purine biosynthesis. Catalyzes the transfer of formate to 5-phospho-ribosyl-glycinamide (GAR), producing 5-phospho-ribosyl-N-formylglycinamide (FGAR). Formate is provided by PurU via hydrolysis of 10-formyl-tetrahydrofolate. This is Formate-dependent phosphoribosylglycinamide formyltransferase from Shewanella sp. (strain MR-7).